Here is a 292-residue protein sequence, read N- to C-terminus: Proteasome subunit beta 2 (292 aa).

Positions 1-59 (MTVDRAPRITDGDTRLSFGSNLSSFSEYLRVHAPEHLPQNRFADTGGVVMGGGDVAPHG) are cleaved as a propeptide — removed in mature form; by autocatalysis. T60 acts as the Nucleophile in catalysis.

The protein belongs to the peptidase T1B family. The 20S proteasome core is composed of 14 alpha and 14 beta subunits that assemble into four stacked heptameric rings, resulting in a barrel-shaped structure. The two inner rings, each composed of seven catalytic beta subunits, are sandwiched by two outer rings, each composed of seven alpha subunits. All four combinations of alpha- and beta-subunits (beta2-alpha1, beta2-alpha2, beta1-alpha2 and beta1-alpha1) yield fully assembled and proteolytically active proteasomes. The catalytic chamber with the active sites is on the inside of the barrel. Has probably a gated structure, the ends of the cylinder being occluded by the N-termini of the alpha-subunits. Is likely capped by the proteasome-associated ATPase, ARC.

It localises to the cytoplasm. The catalysed reaction is Cleavage of peptide bonds with very broad specificity.. It participates in protein degradation; proteasomal Pup-dependent pathway. Its activity is regulated as follows. The formation of the proteasomal ATPase ARC-20S proteasome complex, likely via the docking of the C-termini of ARC into the intersubunit pockets in the alpha-rings, may trigger opening of the gate for substrate entry. Interconversion between the open-gate and close-gate conformations leads to a dynamic regulation of the 20S proteasome proteolysis activity. In terms of biological role, component of the proteasome core, a large protease complex with broad specificity involved in protein degradation. The R.erythropolis proteasomes are able to cleave oligopeptides after Tyr, Phe and Leu, very poorly after Arg but not after Glu. Thus, displays chymotrypsin-like activity, low trypsin-like activity but no caspase-like activity. This is Proteasome subunit beta 2 from Rhodococcus erythropolis (Arthrobacter picolinophilus).